The primary structure comprises 185 residues: Deoxyuridine 5'-triphosphate nucleotidohydrolase (185 aa).

Residues 1 to 23 form a disordered region; sequence MSHLQAHMQRNNKESHSLSPFSQ. Substrate-binding positions include 95–97, asparagine 108, 112–114, and lysine 122; these read RSG and TID. Residues 160-185 are disordered; sequence DQKDSSQTPSNEGSRGADGFGSTGHD. A compositionally biased stretch (gly residues) spans 175 to 185; that stretch reads GADGFGSTGHD.

The protein belongs to the dUTPase family. Mg(2+) is required as a cofactor.

The catalysed reaction is dUTP + H2O = dUMP + diphosphate + H(+). The protein operates within pyrimidine metabolism; dUMP biosynthesis; dUMP from dCTP (dUTP route): step 2/2. In terms of biological role, this enzyme is involved in nucleotide metabolism: it produces dUMP, the immediate precursor of thymidine nucleotides and it decreases the intracellular concentration of dUTP so that uracil cannot be incorporated into DNA. The sequence is that of Deoxyuridine 5'-triphosphate nucleotidohydrolase from Bartonella quintana (strain Toulouse) (Rochalimaea quintana).